The following is a 167-amino-acid chain: Small heat shock protein C1 (167 aa).

Positions 59 to 167 (PFYESNSIKS…EQDAKEIPIN (109 aa)) constitute a sHSP domain.

Belongs to the small heat shock protein (HSP20) family.

This Rickettsia bellii (strain RML369-C) protein is Small heat shock protein C1 (hspC1).